The primary structure comprises 173 residues: MPMKGRFPIRRTLQYLSQGDVVFKDSVKVMTVNYNTHGELGEGARKFVFFNIPQIQYKNPWVQIMLFKNMTPTPFLRFYLDSGEQVLVDVETKSNKEIMEHVKKILGKNEETLRRERQEREQLSHPAHFGPRKYCLRECICEVEGQVPCPAVVPLPRELTGKFQAALRAGAQD.

This sequence belongs to the mitochondrion-specific ribosomal protein mS25 family. Component of the mitochondrial ribosome small subunit (28S) which comprises a 12S rRNA and about 30 distinct proteins.

The protein resides in the mitochondrion. This chain is Small ribosomal subunit protein mS25 (MRPS25), found in Bos taurus (Bovine).